The primary structure comprises 273 residues: MMKRQFEDVTRIVIKIGTSSLVLPTGKINLEKIDQLAFVISSLMNKGKEVILVSSGAMGFGLDILKMEKRPTNLAKQQAVSSVGQVAMMSLYSQIFAYYQTNVSQILLTRDVVVFPESLANVTNAFESLISLGIVPIVNENDAVSVDEMDHATKFGDNDRLSAVVAGITKADLLIMLSDIDGLFDKNPTIYEDAQLRSHVANITQEIIASAGGAGSKFGTGGMLSKVQSAQMVFENKGQMVLMNGANPRDILRVLEGQPLGTWFKQIEEVRHD.

Lys-15 lines the ATP pocket. Positions 55, 142, and 158 each coordinate substrate. Residues Ser-178–Asp-179 and Thr-220–Lys-226 contribute to the ATP site.

The protein belongs to the glutamate 5-kinase family.

The protein localises to the cytoplasm. It catalyses the reaction L-glutamate + ATP = L-glutamyl 5-phosphate + ADP. Its pathway is amino-acid biosynthesis; L-proline biosynthesis; L-glutamate 5-semialdehyde from L-glutamate: step 1/2. Catalyzes the transfer of a phosphate group to glutamate to form L-glutamate 5-phosphate. In Streptococcus pyogenes serotype M1, this protein is Glutamate 5-kinase.